The following is a 337-amino-acid chain: Ferrochelatase (337 aa).

H189 and E293 together coordinate Fe cation.

The protein belongs to the ferrochelatase family.

It is found in the cytoplasm. The enzyme catalyses heme b + 2 H(+) = protoporphyrin IX + Fe(2+). Its pathway is porphyrin-containing compound metabolism; protoheme biosynthesis; protoheme from protoporphyrin-IX: step 1/1. Functionally, catalyzes the ferrous insertion into protoporphyrin IX. The protein is Ferrochelatase of Pseudomonas entomophila (strain L48).